Reading from the N-terminus, the 360-residue chain is Phospho-N-acetylmuramoyl-pentapeptide-transferase (360 aa).

Helical transmembrane passes span 21-41 (YITF…LWIG), 73-93 (TMGG…WADL), 98-118 (VWFV…DDYW), 132-152 (WKYF…YAIG), 168-188 (VMPQ…VGTS), 199-219 (GLAI…AWAT), 236-256 (SGEL…FLWF), 263-283 (VFMG…IAVL), 288-308 (LLLV…ILQV), and 338-358 (VIVR…VTLK).

The protein belongs to the glycosyltransferase 4 family. MraY subfamily. Mg(2+) is required as a cofactor.

It localises to the cell inner membrane. The catalysed reaction is UDP-N-acetyl-alpha-D-muramoyl-L-alanyl-gamma-D-glutamyl-meso-2,6-diaminopimeloyl-D-alanyl-D-alanine + di-trans,octa-cis-undecaprenyl phosphate = di-trans,octa-cis-undecaprenyl diphospho-N-acetyl-alpha-D-muramoyl-L-alanyl-D-glutamyl-meso-2,6-diaminopimeloyl-D-alanyl-D-alanine + UMP. It participates in cell wall biogenesis; peptidoglycan biosynthesis. Functionally, catalyzes the initial step of the lipid cycle reactions in the biosynthesis of the cell wall peptidoglycan: transfers peptidoglycan precursor phospho-MurNAc-pentapeptide from UDP-MurNAc-pentapeptide onto the lipid carrier undecaprenyl phosphate, yielding undecaprenyl-pyrophosphoryl-MurNAc-pentapeptide, known as lipid I. The sequence is that of Phospho-N-acetylmuramoyl-pentapeptide-transferase from Glaesserella parasuis serovar 5 (strain SH0165) (Haemophilus parasuis).